The sequence spans 1207 residues: MVLAAAMSQDADPSGPEQPDRDACIVPGVQGPPAPQGQQGMQPLPPPLPPPPQPQSSLPQIIQNAAKLLDKNPFSVSSQNPLLTSPASVQLAQIQAQLTLHRLKMAQTAVTNNTAAATVLNQVLSKVAMSQPLFNQLRHPSVLGTTHGPTGVSQHAATVPSAHFPSTAIAFSPPSQAGGPGPSVSLPSQPPNAMVVHTFSGVVPQTPAQPAVILSIGKAGPTPATTGFYDYGKANPGQAYGSETEGQPGFLPASASAAASGGVTYEGHYSHTGQDGQATFSKDFYGPSAQGSHAAGGFPADQAGSMKGDVGGLLQGTNSQWERPSGFSGQNKADITAGPGLWAPPASQPYELYDPEEPTSDRAPPAFGSRLNNSKQGFNCSCRRTKEGQAMLSVRPLQGHQLNDFRGLAPLHLPHICSICDKKVFDLKDWELHVKGKLHAQKCLLFSESAGLRSICATGEGTLSASANSTAVYNPTGNEDYTSTLGTSYAAIPTRAFAQSNPMFPSASSGTNFAQRKGAGRVVHICNLPEGSCTENDVINLGLPFGKVTNYILMKSTNQAFLEMAYTEAAQAMVQYYQEKPALINGEKLLIRMSTRYKELQLKKPGKNVAAIIQDIHSQRERCMLREADRYGPERPRSRSPMSRSLSPRSHSPPGPSRADWGNGRDSYAWRDEDRETVPRRENGEDKRDRLDVWAHDRKHYPRQLDKAELDERLEGGRGYREKYLKSGSPGPLHSASGYKGREDGYHRKETKAKLDKHPKQQQQDVPGRSRRKEEARLREPRHPHPEDSGKEEDLEPKVTRAPEGTKSKQSEKSKTKRADRDQEGADDKKEGRGAENEAGTEEQEGMEESPASVGTQQEGTESSDPENTRTKKGQDCDSGSEPEGDNWYPTNMEELVTVDEVGEEDFIMEPDIPELEEIVPIDQKDKILPEICPCVTATLGLDLAKDFTKQGETLGNGDAELSPKLPGQVPSTSTSCPNDTDMEMAGLNLDAERKPAESETGLSPEVSNCYEKEARGAEGSDVRLAPAAQRMSSPQPADERAQQSSPFLDDCKARGSPEDGPHEVSPLEEKASPTTESDLQSQACQENSRYTETRSLNSRSPEFTEAELKEPLSLPSWEPEVFSELSIPLGVEFVVPRTGFYCKLCGLFYTSEEAAKVSHCRSTVHYRNLQKYLSQLAEEGLKETEGVDSPSPERSGIGPHLERKKL.

The tract at residues 1 to 58 is disordered; the sequence is MVLAAAMSQDADPSGPEQPDRDACIVPGVQGPPAPQGQQGMQPLPPPLPPPPQPQSSL. Residues 43–54 are compositionally biased toward pro residues; sequence PLPPPLPPPPQP. Residues 412 to 446 form a U1-type zinc finger; it reads HLPHICSICDKKVFDLKDWELHVKGKLHAQKCLLF. Residues 521–596 enclose the RRM domain; it reads RVVHICNLPE…EKLLIRMSTR (76 aa). Basic and acidic residues predominate over residues 625–637; the sequence is LREADRYGPERPR. Disordered regions lie at residues 625–686, 722–896, and 951–1110; these read LREA…NGED, EKYL…MEEL, and QGET…AELK. Residues 631–650 form an RS region; it reads YGPERPRSRSPMSRSLSPRS. Phosphoserine is present on residues S638, S640, S643, S645, and S652. The segment covering 639 to 650 has biased composition (low complexity); that stretch reads RSPMSRSLSPRS. The segment covering 668 to 686 has biased composition (basic and acidic residues); the sequence is YAWRDEDRETVPRRENGED. Phosphoserine is present on S729. Composition is skewed to basic and acidic residues over residues 740–759, 772–789, and 796–836; these read KGRE…DKHP, RKEE…PEDS, and EPKV…RGAE. S789 is modified (phosphoserine). The span at 839–848 shows a compositional bias: acidic residues; it reads AGTEEQEGME. Phosphoserine occurs at positions 853 and 864. Residues 853–863 are compositionally biased toward polar residues; the sequence is SVGTQQEGTES. The segment covering 867–876 has biased composition (basic and acidic residues); the sequence is ENTRTKKGQD. Phosphoserine is present on residues S879, S881, and S963. Polar residues predominate over residues 970–979; sequence VPSTSTSCPN. S999 bears the Phosphoserine mark. A compositionally biased stretch (basic and acidic residues) spans 1011-1022; that stretch reads YEKEARGAEGSD. Phosphoserine is present on residues S1034, S1046, S1057, S1066, S1078, S1096, and S1101. The span at 1050 to 1072 shows a compositional bias: basic and acidic residues; that stretch reads DDCKARGSPEDGPHEVSPLEEKA. Residues 1073–1102 are compositionally biased toward polar residues; it reads SPTTESDLQSQACQENSRYTETRSLNSRSP. The segment at 1141-1172 adopts a Matrin-type zinc-finger fold; it reads FYCKLCGLFYTSEEAAKVSHCRSTVHYRNLQK. Positions 1181-1207 are disordered; it reads GLKETEGVDSPSPERSGIGPHLERKKL. Phosphoserine is present on residues S1190 and S1192.

Associates with components of the U1 and U2 U1 small nuclear ribonucleoprotein complexes. In terms of processing, phosphorylation regulates the subcellular localization. Phosphorylation of Ser-638 and Ser-640 in the RS (arginine/serine-rich) region promotes nuclear localization of the protein. In contrast, phosphorylation of the C-terminal disordered region promotes localization to cytoplasmic ribonucleoprotein granules.

It localises to the nucleus. It is found in the cytoplasm. Its subcellular location is the cytoplasmic ribonucleoprotein granule. RNA-binding protein that acts as a regulator of mRNA splicing of a subset of genes encoding key structural proteins involved in cardiac development, such as TTN (Titin), CACNA1C, CAMK2D or PDLIM5/ENH. Acts as a repressor of mRNA splicing: specifically binds the 5'UCUU-3' motif that is predominantly found within intronic sequences of pre-mRNAs, leading to the exclusion of specific exons in target transcripts. RBM20-mediated exon skipping is hormone-dependent and is essential for TTN isoform transition in both cardiac and skeletal muscles. RBM20-mediated exon skipping of TTN provides substrates for the formation of circular RNA (circRNAs) from the TTN transcripts. Together with RBM24, promotes the expression of short isoforms of PDLIM5/ENH in cardiomyocytes. This is RNA-binding protein 20 from Rattus norvegicus (Rat).